The chain runs to 383 residues: Seipin (383 aa).

The Cytoplasmic portion of the chain corresponds to 1–27; it reads MVNDPPVPALLWAQEVGHVLAGRARRL. The chain crosses the membrane as a helical span at residues 28 to 48; sequence MLQFGVLFCTILLLLWVSVFL. At 49-242 the chain is on the lumenal side; sequence YGSFYYSYMP…TCAFVGVASN (194 aa). 2 N-linked (GlcNAc...) asparagine glycosylation sites follow: asparagine 88 and asparagine 242. A helical membrane pass occupies residues 243-263; it reads FTFLSVIVLFSYMQWVWGAVW. The Cytoplasmic segment spans residues 264–383; it reads PRHRFSLQVN…LRQRPTCSSS (120 aa). The interval 279-383 is disordered; the sequence is NSHHGAPRRI…LRQRPTCSSS (105 aa). Serine 289 carries the post-translational modification Phosphoserine. The span at 292-302 shows a compositional bias: polar residues; the sequence is QPGQESTQQSD. The segment covering 322–332 has biased composition (basic and acidic residues); that stretch reads EEEKPEKRPLN. Phosphoserine occurs at positions 342 and 345. Over residues 353–371 the composition is skewed to low complexity; it reads TEANPPTSASASALAPETL.

It belongs to the seipin family. Undecamer (an oligomer having eleven subunits). Oligomerization is important for its function in lipid droplet formation. Interacts with LDAF1 to form an oligomeric complex. Interacts with RAB18. Interacts with ZFYVE1 in a RAB18-dependent manner. As to expression, expressed in the paraventricular nucleus of the hypothalamus (PVN) and brainstem dorsal vagal complex (DVC) in oxytocin and catecholaminergic neurons (at protein level). Highest expression detected in subcutaneous and epididymal white adipose tissue, brown adipose tissue and testis. Also expressed in brain, skeletal muscle and adrenal gland, with lower levels detected in liver, heart, kidney, spleen, lung and small intestine. In brain, detected in piriform cortex, olfactory tubercle, islands of Calleja, lateral septal nucleus, medial septal nucleus, nucleus of the vertical limb of the diagonal band, nucleus of the horizontal limb of the diagonal band, preoptic area, paraventricular thalamic nucleus, lateral globus pallidus, supraoptic nucleus, suprachiasmatic nucleus, subfornical organ, paraventricular nucleus of the hypothalamus, zona incerta, dorsomedial nucleus of the hypothalamus, ventromedial nucleus of the hypothalamus, arcuate nucleus of the hypothalamus, basomedial amygdaloid nucleus, medial amygdaloid nucleus, medial habenular, pyramidal cell layer of the hippocampus, granular layer of the dentate gyrus, posterior hypothalamus, supramammilliary nucleus, premammillary nucleus, nucleus of Darkschewitsch, Edinger-Westphal nucleus, ventral tegmental area, dorsal raphe nucleus, periaqueductal gray, median raphe nucleus, lateral parabrachial nucleus, dorsal tegmental nucleus, laterodorsal tegmental nucleus, locus coeruleus, Barrington's nucleus, medial vestibular nucleus, ambiguous nucleus, dorsal vagal complex and hypoglossal nucleus.

Its subcellular location is the endoplasmic reticulum membrane. The protein resides in the lipid droplet. Plays a crucial role in the formation of lipid droplets (LDs) which are storage organelles at the center of lipid and energy homeostasis. In association with LDAF1, defines the sites of LD formation in the ER. Also required for growth and maturation of small nascent LDs into larger mature LDs. Mediates the formation and/or stabilization of endoplasmic reticulum-lipid droplets (ER-LD) contacts, facilitating protein and lipid delivery from the ER into growing LDs. Regulates the maturation of ZFYVE1-positive nascent LDs and the function of the RAB18-ZFYVE1 complex in mediating the formation of ER-LD contacts. Binds anionic phospholipids including phosphatidic acid. Plays an important role in the differentiation and development of adipocytes. This Mus musculus (Mouse) protein is Seipin.